We begin with the raw amino-acid sequence, 286 residues long: Type II restriction enzyme NgoMIV (286 aa).

Residues D140 and C186 each coordinate Mg(2+).

As to quaternary structure, homotetramer. It depends on Mg(2+) as a cofactor.

It carries out the reaction Endonucleolytic cleavage of DNA to give specific double-stranded fragments with terminal 5'-phosphates.. Its function is as follows. A P subtype restriction enzyme that recognizes the double-stranded sequence 5'-GCCGGC-3' and cleaves after G-1. In Neisseria gonorrhoeae, this protein is Type II restriction enzyme NgoMIV (ngoMIVR).